The chain runs to 220 residues: uncharacterized protein (220 aa).

A helical transmembrane segment spans residues 10–30; the sequence is FFIIGGVILSIGLILFFLLGF.

It localises to the membrane. This is an uncharacterized protein from Methanocaldococcus jannaschii (strain ATCC 43067 / DSM 2661 / JAL-1 / JCM 10045 / NBRC 100440) (Methanococcus jannaschii).